The sequence spans 76 residues: DNA-directed RNA polymerase subunit epsilon (76 aa).

Belongs to the RNA polymerase subunit epsilon family. As to quaternary structure, RNAP is composed of a core of 2 alpha, a beta and a beta' subunit. The core is associated with a delta subunit, and at least one of epsilon or omega. When a sigma factor is associated with the core the holoenzyme is formed, which can initiate transcription.

The catalysed reaction is RNA(n) + a ribonucleoside 5'-triphosphate = RNA(n+1) + diphosphate. Functionally, a non-essential component of RNA polymerase (RNAP). The chain is DNA-directed RNA polymerase subunit epsilon from Lactococcus lactis subsp. cremoris (strain MG1363).